The sequence spans 139 residues: Large ribosomal subunit protein uL16 (139 aa).

A compositionally biased stretch (basic residues) spans 1–20; sequence MLIPKRTKYRKQHRPVRRGM. The interval 1 to 21 is disordered; sequence MLIPKRTKYRKQHRPVRRGMS.

Belongs to the universal ribosomal protein uL16 family. In terms of assembly, part of the 50S ribosomal subunit.

Binds 23S rRNA and is also seen to make contacts with the A and possibly P site tRNAs. The sequence is that of Large ribosomal subunit protein uL16 from Bifidobacterium adolescentis (strain ATCC 15703 / DSM 20083 / NCTC 11814 / E194a).